We begin with the raw amino-acid sequence, 100 residues long: Large ribosomal subunit protein uL23 (100 aa).

The protein belongs to the universal ribosomal protein uL23 family. Part of the 50S ribosomal subunit. Contacts protein L29, and trigger factor when it is bound to the ribosome.

Its function is as follows. One of the early assembly proteins it binds 23S rRNA. One of the proteins that surrounds the polypeptide exit tunnel on the outside of the ribosome. Forms the main docking site for trigger factor binding to the ribosome. This chain is Large ribosomal subunit protein uL23, found in Synechococcus sp. (strain WH7803).